A 150-amino-acid polypeptide reads, in one-letter code: D-aminoacyl-tRNA deacylase (150 aa).

A Gly-cisPro motif, important for rejection of L-amino acids motif is present at residues 137–138; that stretch reads GP.

It belongs to the DTD family. As to quaternary structure, homodimer.

It localises to the cytoplasm. The catalysed reaction is glycyl-tRNA(Ala) + H2O = tRNA(Ala) + glycine + H(+). It catalyses the reaction a D-aminoacyl-tRNA + H2O = a tRNA + a D-alpha-amino acid + H(+). Functionally, an aminoacyl-tRNA editing enzyme that deacylates mischarged D-aminoacyl-tRNAs. Also deacylates mischarged glycyl-tRNA(Ala), protecting cells against glycine mischarging by AlaRS. Acts via tRNA-based rather than protein-based catalysis; rejects L-amino acids rather than detecting D-amino acids in the active site. By recycling D-aminoacyl-tRNA to D-amino acids and free tRNA molecules, this enzyme counteracts the toxicity associated with the formation of D-aminoacyl-tRNA entities in vivo and helps enforce protein L-homochirality. This chain is D-aminoacyl-tRNA deacylase, found in Alkalilimnicola ehrlichii (strain ATCC BAA-1101 / DSM 17681 / MLHE-1).